We begin with the raw amino-acid sequence, 161 residues long: Anther-specific protein LAT52 (161 aa).

A signal peptide spans Met-1–Ala-17. 3 disulfides stabilise this stretch: Cys-35/Cys-106, Cys-38/Cys-147, and Cys-59/Cys-94. Residue Asn-61 is glycosylated (N-linked (GlcNAc...) asparagine).

The protein belongs to the Ole e I family. In terms of tissue distribution, expressed in anthers and pollen.

In terms of biological role, may play a role during germination or early tube growth. The chain is Anther-specific protein LAT52 (LAT52) from Solanum lycopersicum (Tomato).